The chain runs to 452 residues: Maltoporin (452 aa).

The N-terminal stretch at 1–25 is a signal peptide; that stretch reads MMITLRKLPLAVAVAAGVMSAQAMA.

This sequence belongs to the porin LamB (TC 1.B.3) family. As to quaternary structure, homotrimer formed of three 18-stranded antiparallel beta-barrels, containing three independent channels.

The protein localises to the cell outer membrane. The enzyme catalyses beta-maltose(in) = beta-maltose(out). Functionally, involved in the transport of maltose and maltodextrins. The polypeptide is Maltoporin (Salmonella enteritidis PT4 (strain P125109)).